The primary structure comprises 190 residues: Elongation factor P (190 aa).

Belongs to the elongation factor P family.

The protein resides in the cytoplasm. It participates in protein biosynthesis; polypeptide chain elongation. Functionally, involved in peptide bond synthesis. Stimulates efficient translation and peptide-bond synthesis on native or reconstituted 70S ribosomes in vitro. Probably functions indirectly by altering the affinity of the ribosome for aminoacyl-tRNA, thus increasing their reactivity as acceptors for peptidyl transferase. The sequence is that of Elongation factor P from Bartonella bacilliformis (strain ATCC 35685 / KC583 / Herrer 020/F12,63).